The chain runs to 1187 residues: Probable histidine kinase 5 (1187 aa).

Residues 1–175 (MSRVGECGGG…QNNALSFNHG (175 aa)) lie on the Extracellular side of the membrane. A helical transmembrane segment spans residues 176-196 (MIFSLSASLGIVVILVVITIF). The Cytoplasmic segment spans residues 197 to 226 (KRGKQANELCQHEKLLQTPSVKISRKWSKR). A helical membrane pass occupies residues 227-247 (ALLLGVLVGLCSSVWIFSSMH). Residues 248–531 (ADVVARRIEN…FKHAPSLPWS (284 aa)) lie on the Extracellular side of the membrane. One can recognise a CHASE domain in the interval 295–519 (NPSAIDQKTF…GDPTRKHVMH (225 aa)). A helical membrane pass occupies residues 532 to 552 (AIMISSAVAIIVLLVGYIIYA). At 553-1187 (TLNSLEEAED…LEADATDPLT (635 aa)) the chain is on the cytoplasmic side. The region spanning 587-862 (TVSHEIRTPM…TFSFTAIFKE (276 aa)) is the Histidine kinase domain. A Phosphohistidine; by autocatalysis modification is found at His590. Response regulatory domains lie at 886-1017 (RALV…SKAL) and 1041-1178 (NILV…AHFL). Asp942 and Asp1091 each carry 4-aspartylphosphate.

Post-translationally, activation probably requires a transfer of a phosphate group between a His in the transmitter domain and an Asp of the receiver domain. As to expression, highly expressed in young leaves and at lower levels in roots, mature leaves, stems and spikelets.

The protein resides in the cell membrane. The enzyme catalyses ATP + protein L-histidine = ADP + protein N-phospho-L-histidine.. Its function is as follows. Cytokinin receptor related to bacterial two-component regulators. Functions as a histidine kinase and transmits the stress signal to a downstream MAPK cascade. This is Probable histidine kinase 5 from Oryza sativa subsp. japonica (Rice).